Consider the following 434-residue polypeptide: Pectate lyase (434 aa).

The N-terminal stretch at 1-22 is a signal peptide; it reads MKAAQFFLYSLLFFASAALSSA. 2 N-linked (GlcNAc...) asparagine glycosylation sites follow: asparagine 68 and asparagine 97. Ca(2+) contacts are provided by aspartate 232, aspartate 256, and aspartate 260. The active site involves arginine 312.

This sequence belongs to the polysaccharide lyase 1 family. Ca(2+) is required as a cofactor.

It catalyses the reaction Eliminative cleavage of (1-&gt;4)-alpha-D-galacturonan to give oligosaccharides with 4-deoxy-alpha-D-galact-4-enuronosyl groups at their non-reducing ends.. The protein operates within glycan metabolism; pectin degradation; 2-dehydro-3-deoxy-D-gluconate from pectin: step 2/5. The chain is Pectate lyase from Lilium longiflorum (Trumpet lily).